The following is a 429-amino-acid chain: 3-phosphoshikimate 1-carboxyvinyltransferase (429 aa).

3 residues coordinate 3-phosphoshikimate: lysine 23, serine 24, and arginine 28. Position 23 (lysine 23) interacts with phosphoenolpyruvate. Residues glycine 95 and arginine 123 each contribute to the phosphoenolpyruvate site. 3-phosphoshikimate contacts are provided by serine 168, glutamine 170, aspartate 316, and lysine 343. A phosphoenolpyruvate-binding site is contributed by glutamine 170. The active-site Proton acceptor is aspartate 316. Arginine 347 and arginine 389 together coordinate phosphoenolpyruvate.

This sequence belongs to the EPSP synthase family. As to quaternary structure, monomer.

It is found in the cytoplasm. It carries out the reaction 3-phosphoshikimate + phosphoenolpyruvate = 5-O-(1-carboxyvinyl)-3-phosphoshikimate + phosphate. The protein operates within metabolic intermediate biosynthesis; chorismate biosynthesis; chorismate from D-erythrose 4-phosphate and phosphoenolpyruvate: step 6/7. Its function is as follows. Catalyzes the transfer of the enolpyruvyl moiety of phosphoenolpyruvate (PEP) to the 5-hydroxyl of shikimate-3-phosphate (S3P) to produce enolpyruvyl shikimate-3-phosphate and inorganic phosphate. This is 3-phosphoshikimate 1-carboxyvinyltransferase from Bacillus cereus (strain B4264).